The following is a 383-amino-acid chain: U-box domain-containing protein 63 (383 aa).

The tract at residues 166-186 is disordered; that stretch reads PDGNVSNSHRNTQQKRDFASV. Positions 201 to 273 constitute a U-box domain; sequence SLKAILSDPV…HAFRQEEDSD (73 aa).

The catalysed reaction is S-ubiquitinyl-[E2 ubiquitin-conjugating enzyme]-L-cysteine + [acceptor protein]-L-lysine = [E2 ubiquitin-conjugating enzyme]-L-cysteine + N(6)-ubiquitinyl-[acceptor protein]-L-lysine.. It participates in protein modification; protein ubiquitination. Its function is as follows. Functions as an E3 ubiquitin ligase. The sequence is that of U-box domain-containing protein 63 (PUB63) from Arabidopsis thaliana (Mouse-ear cress).